The sequence spans 285 residues: Polyamine aminopropyltransferase (285 aa).

The 234-residue stretch at Glu5–Asp238 folds into the PABS domain. Residue Gln33 participates in S-methyl-5'-thioadenosine binding. His64 and Asp88 together coordinate spermidine. S-methyl-5'-thioadenosine contacts are provided by residues Glu108 and Asp140–Gly141. Asp158 serves as the catalytic Proton acceptor. Spermidine is bound at residue Asp158–Asp161. Position 165 (Pro165) interacts with S-methyl-5'-thioadenosine.

This sequence belongs to the spermidine/spermine synthase family. In terms of assembly, homodimer or homotetramer.

Its subcellular location is the cytoplasm. It catalyses the reaction S-adenosyl 3-(methylsulfanyl)propylamine + putrescine = S-methyl-5'-thioadenosine + spermidine + H(+). Its pathway is amine and polyamine biosynthesis; spermidine biosynthesis; spermidine from putrescine: step 1/1. Catalyzes the irreversible transfer of a propylamine group from the amino donor S-adenosylmethioninamine (decarboxy-AdoMet) to putrescine (1,4-diaminobutane) to yield spermidine. This Erwinia tasmaniensis (strain DSM 17950 / CFBP 7177 / CIP 109463 / NCPPB 4357 / Et1/99) protein is Polyamine aminopropyltransferase.